A 281-amino-acid polypeptide reads, in one-letter code: NAD-dependent protein deacetylase 3 (281 aa).

The 281-residue stretch at M1–R281 folds into the Deacetylase sirtuin-type domain. NAD(+)-binding positions include G27–R47 and Q105–D108. H123 serves as the catalytic Proton acceptor. Residues C131, C134, C182, and C185 each contribute to the Zn(2+) site. NAD(+) is bound by residues G223 to S225, N249 to G251, and C267.

It belongs to the sirtuin family. Class II subfamily. Zn(2+) serves as cofactor.

It is found in the cytoplasm. It carries out the reaction N(6)-acetyl-L-lysyl-[protein] + NAD(+) + H2O = 2''-O-acetyl-ADP-D-ribose + nicotinamide + L-lysyl-[protein]. Its function is as follows. NAD-dependent protein deacetylase which modulates the activities of several enzymes which are inactive in their acetylated form. The chain is NAD-dependent protein deacetylase 3 from Pseudomonas syringae pv. tomato (strain ATCC BAA-871 / DC3000).